We begin with the raw amino-acid sequence, 145 residues long: Large ribosomal subunit protein uL13 (145 aa).

The protein belongs to the universal ribosomal protein uL13 family. As to quaternary structure, part of the 50S ribosomal subunit.

Its function is as follows. This protein is one of the early assembly proteins of the 50S ribosomal subunit, although it is not seen to bind rRNA by itself. It is important during the early stages of 50S assembly. The chain is Large ribosomal subunit protein uL13 from Listeria monocytogenes serotype 4b (strain CLIP80459).